Reading from the N-terminus, the 550-residue chain is Arginine--tRNA ligase (550 aa).

The 'HIGH' region signature appears at 130–140; the sequence is ANPTGPIHIGG.

The protein belongs to the class-I aminoacyl-tRNA synthetase family. Monomer.

Its subcellular location is the cytoplasm. It catalyses the reaction tRNA(Arg) + L-arginine + ATP = L-arginyl-tRNA(Arg) + AMP + diphosphate. The sequence is that of Arginine--tRNA ligase (argS) from Mycobacterium leprae (strain TN).